The following is a 378-amino-acid chain: Actin-related protein 2/3 complex subunit 1B (378 aa).

7 WD repeats span residues 8-47, 53-92, 97-138, 143-182, 203-242, 257-295, and 331-375; these read RFAE…HWER, KHDQ…WVPT, RLNR…WVSK, RHES…VDTK, LSYS…PLAQ, ISEK…KAAS, and VHDN…QELG. The segment at 319–340 is disordered; the sequence is TTANDASDSRGGVHDNSITSIV.

The protein belongs to the WD repeat ARPC1 family. In terms of assembly, component of the Arp2/3 complex composed of ARP2, ARP3, ARPC1/p41-ARC, ARPC2/p34-ARC, ARPC3/p21-ARC, ARPC4/p20-ARC and ARPC5/p16-ARC. Expressed at low levels in all tissues with a relatively highest expression in inflorescences.

It localises to the cytoplasm. It is found in the cytoskeleton. Its function is as follows. Functions as a component of the Arp2/3 complex which is involved in regulation of actin polymerization and together with an activating nucleation-promoting factor (NPF) mediates the formation of branched actin networks. Arp2/3 complex plays a critical role in the control of cell morphogenesis via the modulation of cell polarity development. The sequence is that of Actin-related protein 2/3 complex subunit 1B (ARPC1B) from Arabidopsis thaliana (Mouse-ear cress).